The sequence spans 339 residues: DNA-directed RNA polymerase subunit alpha (339 aa).

Positions 1–233 (MVREKVRIST…DLFIPFLHAE (233 aa)) are alpha N-terminal domain (alpha-NTD). The tract at residues 267–339 (IALKSIFIDQ…FTINLPKNKF (73 aa)) is alpha C-terminal domain (alpha-CTD).

This sequence belongs to the RNA polymerase alpha chain family. In plastids the minimal PEP RNA polymerase catalytic core is composed of four subunits: alpha, beta, beta', and beta''. When a (nuclear-encoded) sigma factor is associated with the core the holoenzyme is formed, which can initiate transcription.

It localises to the plastid. The protein localises to the chloroplast. It catalyses the reaction RNA(n) + a ribonucleoside 5'-triphosphate = RNA(n+1) + diphosphate. Functionally, DNA-dependent RNA polymerase catalyzes the transcription of DNA into RNA using the four ribonucleoside triphosphates as substrates. In Populus alba (White poplar), this protein is DNA-directed RNA polymerase subunit alpha.